The following is a 117-amino-acid chain: Ig heavy chain V region 5-76 (117 aa).

Positions 1–19 (MNFVLSLIFLALILKGVQC) are cleaved as a signal peptide. Positions 20–49 (EVHLVESGGGLVKPGGSLKLSCVVSGFTFN) are framework-1. The cysteines at positions 41 and 115 are disulfide-linked. A complementarity-determining-1 region spans residues 50-54 (KYAMS). A framework-2 region spans residues 55–68 (WVRQTPEKRLEWVA). The interval 69–85 (TISSGGLYTYYPDSVKG) is complementarity-determining-2. A framework-3 region spans residues 86 to 117 (RFTISRDNAGNTLYLQMSSLRSEDTAMYYCAR).

The protein is Ig heavy chain V region 5-76 of Mus musculus (Mouse).